Consider the following 112-residue polypeptide: Large ribosomal subunit protein P1 (112 aa).

A disordered region spans residues 80–112 (AAAAPAAESKKEEKKKEEESDQSDDDMGFGLFD). A compositionally biased stretch (basic and acidic residues) spans 87-97 (ESKKEEKKKEE). 2 positions are modified to phosphoserine: Ser-99 and Ser-102.

Belongs to the eukaryotic ribosomal protein P1/P2 family. In terms of assembly, P1 and P2 exist as dimers at the large ribosomal subunit.

Its function is as follows. Plays an important role in the elongation step of protein synthesis. This Drosophila melanogaster (Fruit fly) protein is Large ribosomal subunit protein P1 (RpLP1).